Reading from the N-terminus, the 1181-residue chain is Poly [ADP-ribose] polymerase tankyrase (1181 aa).

ANK repeat units follow at residues 56–85, 89–118, 122–151, 209–238, 242–271, 275–304, 362–394, 398–427, 431–458, 483–513, 519–548, 552–581, 585–614, 638–668, 672–701, 705–734, 738–767, and 771–799; these read RKST…SIQA, GGLH…SPNT, WNYT…NHTI, RRST…DVHA, GGLV…NVNA, WAFT…DPTL, TGDT…LLNE, AFLT…KVNA, LGQT…DTNI, DSET…SVNC, RHST…EVYA, GGLV…NVNV, WKFT…DPMK, RGPS…NCRD, RNST…DVNA, GGLI…VVNA, WGFT…DAYM, and EGQT…LSQQ. 2 disordered regions span residues 807–834 and 864–886; these read SLTS…SAIL and RISP…DLLP. One can recognise an SAM domain in the interval 889 to 952; it reads DTITNVSGFL…LKGIAQLRST (64 aa). The region spanning 969 to 1174 is the PARP catalytic domain; the sequence is LPDDKEFVAV…YQIVKPDDSS (206 aa). The Zn(2+) site is built by C1091, H1094, C1099, and C1102.

The protein belongs to the ARTD/PARP family. As to quaternary structure, interacts (via ANK repeats) with PI31.

It carries out the reaction NAD(+) + (ADP-D-ribosyl)n-acceptor = nicotinamide + (ADP-D-ribosyl)n+1-acceptor + H(+).. The catalysed reaction is L-aspartyl-[protein] + NAD(+) = 4-O-(ADP-D-ribosyl)-L-aspartyl-[protein] + nicotinamide. It catalyses the reaction L-glutamyl-[protein] + NAD(+) = 5-O-(ADP-D-ribosyl)-L-glutamyl-[protein] + nicotinamide. In terms of biological role, stimulates proteasome activity, probably by ADP-ribosylation of PI31. Modulates 26S proteasome assembly. This Drosophila melanogaster (Fruit fly) protein is Poly [ADP-ribose] polymerase tankyrase.